Reading from the N-terminus, the 308-residue chain is D-alanine--D-alanine ligase (308 aa).

The ATP-grasp domain occupies 103–302 (KTVMATAGVP…FDELVQWMVE (200 aa)). An ATP-binding site is contributed by 130-184 (MAPPYVIKPVADGSSVGVFIVTEDQAHPPQELFRDDWPHGEELLVEKYIAGRELT). Residues Asp-252, Glu-269, and Asn-271 each coordinate Mg(2+).

This sequence belongs to the D-alanine--D-alanine ligase family. Mg(2+) serves as cofactor. Mn(2+) is required as a cofactor.

The protein resides in the cytoplasm. The catalysed reaction is 2 D-alanine + ATP = D-alanyl-D-alanine + ADP + phosphate + H(+). It participates in cell wall biogenesis; peptidoglycan biosynthesis. Functionally, cell wall formation. In Afipia carboxidovorans (strain ATCC 49405 / DSM 1227 / KCTC 32145 / OM5) (Oligotropha carboxidovorans), this protein is D-alanine--D-alanine ligase.